The sequence spans 238 residues: Orotidine 5'-phosphate decarboxylase (238 aa).

Substrate contacts are provided by residues Asp-11, Lys-32, Asp-59–Thr-68, Thr-123, Arg-185, Gln-194, Gly-214, and Arg-215. The active-site Proton donor is Lys-61.

It belongs to the OMP decarboxylase family. Type 1 subfamily. In terms of assembly, homodimer.

The enzyme catalyses orotidine 5'-phosphate + H(+) = UMP + CO2. It functions in the pathway pyrimidine metabolism; UMP biosynthesis via de novo pathway; UMP from orotate: step 2/2. In terms of biological role, catalyzes the decarboxylation of orotidine 5'-monophosphate (OMP) to uridine 5'-monophosphate (UMP). This chain is Orotidine 5'-phosphate decarboxylase, found in Nostoc sp. (strain PCC 7120 / SAG 25.82 / UTEX 2576).